The primary structure comprises 156 residues: Ribosomal RNA large subunit methyltransferase H (156 aa).

Residues L73, G104, and 123–128 (LSALTL) contribute to the S-adenosyl-L-methionine site.

The protein belongs to the RNA methyltransferase RlmH family. As to quaternary structure, homodimer.

The protein resides in the cytoplasm. It catalyses the reaction pseudouridine(1915) in 23S rRNA + S-adenosyl-L-methionine = N(3)-methylpseudouridine(1915) in 23S rRNA + S-adenosyl-L-homocysteine + H(+). Specifically methylates the pseudouridine at position 1915 (m3Psi1915) in 23S rRNA. The sequence is that of Ribosomal RNA large subunit methyltransferase H from Shewanella sediminis (strain HAW-EB3).